The following is a 192-amino-acid chain: GTP cyclohydrolase-2 (192 aa).

GTP is bound at residue 50-54; it reads RLHSE. Zn(2+) contacts are provided by cysteine 55, cysteine 66, and cysteine 68. GTP-binding positions include 92–94 and threonine 114; that span reads EGR. Aspartate 126 (proton acceptor) is an active-site residue. The Nucleophile role is filled by arginine 128. GTP contacts are provided by threonine 149 and lysine 154.

Belongs to the GTP cyclohydrolase II family. It depends on Zn(2+) as a cofactor.

The catalysed reaction is GTP + 4 H2O = 2,5-diamino-6-hydroxy-4-(5-phosphoribosylamino)-pyrimidine + formate + 2 phosphate + 3 H(+). The protein operates within cofactor biosynthesis; riboflavin biosynthesis; 5-amino-6-(D-ribitylamino)uracil from GTP: step 1/4. Its function is as follows. Catalyzes the conversion of GTP to 2,5-diamino-6-ribosylamino-4(3H)-pyrimidinone 5'-phosphate (DARP), formate and pyrophosphate. In Helicobacter pylori (strain P12), this protein is GTP cyclohydrolase-2.